Here is a 382-residue protein sequence, read N- to C-terminus: Quinolinate synthase (382 aa).

Positions 63 and 84 each coordinate iminosuccinate. Cysteine 129 serves as a coordination point for [4Fe-4S] cluster. Residues 155 to 157 and serine 172 contribute to the iminosuccinate site; that span reads YAN. Cysteine 216 is a [4Fe-4S] cluster binding site. Residues 242 to 244 and threonine 259 each bind iminosuccinate; that span reads HPE. Cysteine 313 is a binding site for [4Fe-4S] cluster.

Belongs to the quinolinate synthase family. Type 1 subfamily. [4Fe-4S] cluster is required as a cofactor.

Its subcellular location is the cytoplasm. The enzyme catalyses iminosuccinate + dihydroxyacetone phosphate = quinolinate + phosphate + 2 H2O + H(+). It functions in the pathway cofactor biosynthesis; NAD(+) biosynthesis; quinolinate from iminoaspartate: step 1/1. Its function is as follows. Catalyzes the condensation of iminoaspartate with dihydroxyacetone phosphate to form quinolinate. This chain is Quinolinate synthase, found in Ralstonia pickettii (strain 12J).